We begin with the raw amino-acid sequence, 98 residues long: NADH-ubiquinone oxidoreductase chain 4L (98 aa).

3 helical membrane-spanning segments follow: residues 1 to 21 (MSIT…GLLL), 29 to 49 (SLLC…MIIL), and 61 to 81 (IILL…LVMV).

This sequence belongs to the complex I subunit 4L family. In terms of assembly, core subunit of respiratory chain NADH dehydrogenase (Complex I) which is composed of 45 different subunits.

Its subcellular location is the mitochondrion inner membrane. The enzyme catalyses a ubiquinone + NADH + 5 H(+)(in) = a ubiquinol + NAD(+) + 4 H(+)(out). Core subunit of the mitochondrial membrane respiratory chain NADH dehydrogenase (Complex I) which catalyzes electron transfer from NADH through the respiratory chain, using ubiquinone as an electron acceptor. Part of the enzyme membrane arm which is embedded in the lipid bilayer and involved in proton translocation. The polypeptide is NADH-ubiquinone oxidoreductase chain 4L (MT-ND4L) (Platyrrhinus dorsalis (Thomas's broad-nosed bat)).